The sequence spans 89 residues: Small ribosomal subunit protein uS15 (89 aa).

The protein belongs to the universal ribosomal protein uS15 family. Part of the 30S ribosomal subunit. Forms a bridge to the 50S subunit in the 70S ribosome, contacting the 23S rRNA.

One of the primary rRNA binding proteins, it binds directly to 16S rRNA where it helps nucleate assembly of the platform of the 30S subunit by binding and bridging several RNA helices of the 16S rRNA. Its function is as follows. Forms an intersubunit bridge (bridge B4) with the 23S rRNA of the 50S subunit in the ribosome. In Azotobacter vinelandii (strain DJ / ATCC BAA-1303), this protein is Small ribosomal subunit protein uS15.